A 159-amino-acid chain; its full sequence is Putative phosphatidylinositol-3-phosphatase (159 aa).

Positions 1 to 16 (MKRPSFLPVLIGTGFG) are cleaved as a signal peptide. Transmembrane regions (helical) follow at residues 30 to 50 (LLAS…ALLW), 54 to 74 (ALVV…ESCW), 104 to 124 (WYVI…PLGV), and 134 to 154 (VGVM…IAVA).

Its subcellular location is the membrane. The enzyme catalyses a 1,2-diacyl-sn-glycero-3-phospho-(1D-myo-inositol-3-phosphate) + H2O = a 1,2-diacyl-sn-glycero-3-phospho-(1D-myo-inositol) + phosphate. In terms of biological role, may be responsible for the conversion of phosphatidylinositol phosphate diacylglycerol (PIP-DAG) to phosphatidylinositol diacylglycerol (PI-DAG), making it a key enzyme in the inositol glycerophospholipid biosynthesis pathway. In Bacteroides thetaiotaomicron (strain ATCC 29148 / DSM 2079 / JCM 5827 / CCUG 10774 / NCTC 10582 / VPI-5482 / E50), this protein is Putative phosphatidylinositol-3-phosphatase.